Here is a 269-residue protein sequence, read N- to C-terminus: 4-hydroxy-tetrahydrodipicolinate reductase (269 aa).

11–16 (GPIGRM) contacts NAD(+). NADP(+) is bound at residue K39. Residues 101–103 (GTT) and 125–128 (ASNF) each bind NAD(+). H158 functions as the Proton donor/acceptor in the catalytic mechanism. Residue H159 participates in (S)-2,3,4,5-tetrahydrodipicolinate binding. K162 (proton donor) is an active-site residue. 168–169 (GT) lines the (S)-2,3,4,5-tetrahydrodipicolinate pocket.

The protein belongs to the DapB family. As to quaternary structure, homotetramer.

The protein resides in the cytoplasm. The enzyme catalyses (S)-2,3,4,5-tetrahydrodipicolinate + NAD(+) + H2O = (2S,4S)-4-hydroxy-2,3,4,5-tetrahydrodipicolinate + NADH + H(+). The catalysed reaction is (S)-2,3,4,5-tetrahydrodipicolinate + NADP(+) + H2O = (2S,4S)-4-hydroxy-2,3,4,5-tetrahydrodipicolinate + NADPH + H(+). Its pathway is amino-acid biosynthesis; L-lysine biosynthesis via DAP pathway; (S)-tetrahydrodipicolinate from L-aspartate: step 4/4. In terms of biological role, catalyzes the conversion of 4-hydroxy-tetrahydrodipicolinate (HTPA) to tetrahydrodipicolinate. The sequence is that of 4-hydroxy-tetrahydrodipicolinate reductase from Buchnera aphidicola subsp. Acyrthosiphon pisum (strain Tuc7).